The sequence spans 502 residues: Glycerol kinase (502 aa).

Thr-15 contacts ADP. ATP is bound by residues Thr-15, Thr-16, and Ser-17. Residue Thr-15 participates in sn-glycerol 3-phosphate binding. Arg-19 contributes to the ADP binding site. Sn-glycerol 3-phosphate contacts are provided by Arg-85, Glu-86, and Tyr-137. Arg-85, Glu-86, and Tyr-137 together coordinate glycerol. The residue at position 233 (His-233) is a Phosphohistidine; by HPr. Asp-247 is a sn-glycerol 3-phosphate binding site. Asp-247 and Gln-248 together coordinate glycerol. Residues Thr-269 and Gly-312 each contribute to the ADP site. The ATP site is built by Thr-269, Gly-312, Gln-316, and Gly-413. ADP is bound by residues Gly-413 and Asn-417.

The protein belongs to the FGGY kinase family. In terms of assembly, homotetramer and homodimer (in equilibrium). In terms of processing, the phosphoenolpyruvate-dependent sugar phosphotransferase system (PTS), including enzyme I, and histidine-containing protein (HPr) are required for the phosphorylation, which leads to the activation of the enzyme.

The enzyme catalyses glycerol + ATP = sn-glycerol 3-phosphate + ADP + H(+). It participates in polyol metabolism; glycerol degradation via glycerol kinase pathway; sn-glycerol 3-phosphate from glycerol: step 1/1. Its activity is regulated as follows. Activated by phosphorylation and inhibited by fructose 1,6-bisphosphate (FBP). Key enzyme in the regulation of glycerol uptake and metabolism. Catalyzes the phosphorylation of glycerol to yield sn-glycerol 3-phosphate. The chain is Glycerol kinase from Streptococcus agalactiae serotype Ia (strain ATCC 27591 / A909 / CDC SS700).